An 83-amino-acid chain; its full sequence is Small ribosomal subunit protein bS20 (83 aa).

The protein belongs to the bacterial ribosomal protein bS20 family.

Functionally, binds directly to 16S ribosomal RNA. The sequence is that of Small ribosomal subunit protein bS20 from Leuconostoc mesenteroides subsp. mesenteroides (strain ATCC 8293 / DSM 20343 / BCRC 11652 / CCM 1803 / JCM 6124 / NCDO 523 / NBRC 100496 / NCIMB 8023 / NCTC 12954 / NRRL B-1118 / 37Y).